We begin with the raw amino-acid sequence, 384 residues long: 1-deoxy-D-xylulose 5-phosphate reductoisomerase (384 aa).

Threonine 10, glycine 11, serine 12, isoleucine 13, glycine 36, asparagine 38, and asparagine 122 together coordinate NADPH. Residue lysine 123 participates in 1-deoxy-D-xylulose 5-phosphate binding. Position 124 (glutamate 124) interacts with NADPH. Aspartate 148 lines the Mn(2+) pocket. Positions 149, 150, 174, and 197 each coordinate 1-deoxy-D-xylulose 5-phosphate. Glutamate 150 is a Mn(2+) binding site. NADPH is bound at residue glycine 203. Serine 210, asparagine 215, lysine 216, and glutamate 219 together coordinate 1-deoxy-D-xylulose 5-phosphate. Glutamate 219 contacts Mn(2+).

This sequence belongs to the DXR family. It depends on Mg(2+) as a cofactor. The cofactor is Mn(2+).

The enzyme catalyses 2-C-methyl-D-erythritol 4-phosphate + NADP(+) = 1-deoxy-D-xylulose 5-phosphate + NADPH + H(+). The protein operates within isoprenoid biosynthesis; isopentenyl diphosphate biosynthesis via DXP pathway; isopentenyl diphosphate from 1-deoxy-D-xylulose 5-phosphate: step 1/6. Functionally, catalyzes the NADPH-dependent rearrangement and reduction of 1-deoxy-D-xylulose-5-phosphate (DXP) to 2-C-methyl-D-erythritol 4-phosphate (MEP). The polypeptide is 1-deoxy-D-xylulose 5-phosphate reductoisomerase (Geobacter metallireducens (strain ATCC 53774 / DSM 7210 / GS-15)).